The following is a 697-amino-acid chain: Lebercilin (697 aa).

The segment at 1–90 (MGERAGSPGT…VGFRSQSLNR (90 aa)) is disordered. Ser7 and Ser45 each carry phosphoserine. The segment covering 32 to 45 (SSGRSSLVSSSPAS) has biased composition (low complexity). 2 coiled-coil regions span residues 103–297 (RILS…IKNI) and 389–485 (EEKF…RNLK). 3 disordered regions span residues 412–432 (WERE…EREE), 522–548 (HHLQ…PASP), and 606–697 (EQLF…VALR). Positions 416 to 432 (ELDKKQKEKASLLEREE) are enriched in basic and acidic residues. A compositionally biased stretch (polar residues) spans 527 to 547 (ISFSTPKGEGQNSGNVRSPAS). Residues 612 to 626 (SGSSTISSKSSDPNS) are compositionally biased toward low complexity. Residues 686–697 (SVEDEIEEVALR) are compositionally biased toward acidic residues.

It belongs to the LCA5 family. In terms of assembly, interacts with NINL. Interacts with OFD1. Interacts with FAM161A. Interacts with components of the IFT complex B. In terms of tissue distribution, widely expressed.

The protein resides in the cytoplasm. Its subcellular location is the cytoskeleton. It localises to the cilium axoneme. The protein localises to the cilium basal body. It is found in the microtubule organizing center. The protein resides in the centrosome. Its subcellular location is the cell projection. It localises to the cilium. Functionally, involved in intraflagellar protein (IFT) transport in photoreceptor cilia. This chain is Lebercilin (LCA5), found in Homo sapiens (Human).